Consider the following 850-residue polypeptide: Envelope glycoprotein gp160 (850 aa).

A signal peptide spans 1 to 28 (METQTSWLSLWRWGLMIFGMLMICSARE). At 29-678 (NLWVTVYYGV…ISNWLWYIKI (650 aa)) the chain is on the extracellular side. C50 and C70 are oxidised to a cystine. N-linked (GlcNAc...) asparagine; by host glycans are attached at residues N84, N126, N133, N134, N139, N152, N156, N184, N193, N226, N230, N237, N258, N272, N285, N297, N327, N334, and N349. 5 cysteine pairs are disulfide-bonded: C115–C201, C122–C192, C127–C153, C214–C243, and C224–C235. The interval 127–152 (CSDVNSNNSTDSNSSASNNSPEIMKN) is V1. Residues 153–192 (CSFNVTTEIRNKRKQEYALFYRQDVVPINSDNKSYILINC) form a V2 region. The segment at 292–325 (CTRPNNNTRKGIHMGPGQVLYATGEIIGDIRKAY) is V3. Residues C292 and C326 are joined by a disulfide bond. The CD4-binding loop stretch occupies residues 357–367 (PSGGDIEITTH). Disulfide bonds link C371-C436 and C378-C409. Residues 378–409 (CNTSTLFNSSWDENNIKDTNSTNDNTTITIPC) form a V4 region. N-linked (GlcNAc...) asparagine; by host glycosylation is found at N379, N385, N397, N402, N433, N439, N453, and N457. The interval 447 to 467 (RDGGNRNGSENGTETFRPTGG) is disordered. A compositionally biased stretch (polar residues) spans 453-462 (NGSENGTETF). 2 V5 regions span residues 453 to 465 (NGSE…FRPT) and 454 to 465 (GSENGTETFRPT). The fusion peptide stretch occupies residues 506–526 (AVGIGAVFLGFLGTAGSTMGA). Residues 568-586 (KQLQARVLAVERYLKDQQL) are immunosuppression. A disulfide bond links C592 and C598. 5 N-linked (GlcNAc...) asparagine; by host glycosylation sites follow: N605, N610, N619, N631, and N668. A coiled-coil region spans residues 627–661 (REINNYTGIIYSLIEEAQNQQETNEKDLLALDKWT). The interval 656 to 677 (ALDKWTNLWNWFNISNWLWYIK) is MPER; binding to GalCer. Residues 679 to 699 (FIMIIGGLIGLRIIFAVLAIV) form a helical membrane-spanning segment. Residues 700–850 (NRVRQGYSPL…IRQGLERALL (151 aa)) are Cytoplasmic-facing. The short motif at 706 to 709 (YSPL) is the YXXL motif; contains endocytosis signal element. The S-palmitoyl cysteine; by host moiety is linked to residue C758. The Di-leucine internalization motif signature appears at 849–850 (LL).

This sequence belongs to the HIV-1 env protein family. The mature envelope protein (Env) consists of a homotrimer of non-covalently associated gp120-gp41 heterodimers. The resulting complex protrudes from the virus surface as a spike. There seems to be as few as 10 spikes on the average virion. Interacts with host CD4, CCR5 and CXCR4. Gp120 also interacts with the C-type lectins CD209/DC-SIGN and CLEC4M/DC-SIGNR (collectively referred to as DC-SIGN(R)). Gp120 and gp41 interact with GalCer. Gp120 interacts with host ITGA4/ITGB7 complex; on CD4+ T-cells, this interaction results in rapid activation of integrin ITGAL/LFA-1, which facilitates efficient cell-to-cell spreading of HIV-1. Gp120 interacts with cell-associated heparan sulfate; this interaction increases virus infectivity on permissive cells and may be involved in infection of CD4- cells. As to quaternary structure, the mature envelope protein (Env) consists of a homotrimer of non-covalently associated gp120-gp41 heterodimers. The resulting complex protrudes from the virus surface as a spike. There seems to be as few as 10 spikes on the average virion. In terms of processing, highly glycosylated by host. The high number of glycan on the protein is reffered to as 'glycan shield' because it contributes to hide protein sequence from adaptive immune system. Palmitoylation of the transmembrane protein and of Env polyprotein (prior to its proteolytic cleavage) is essential for their association with host cell membrane lipid rafts. Palmitoylation is therefore required for envelope trafficking to classical lipid rafts, but not for viral replication. Post-translationally, specific enzymatic cleavages in vivo yield mature proteins. Envelope glycoproteins are synthesized as an inactive precursor that is heavily N-glycosylated and processed likely by host cell furin in the Golgi to yield the mature SU and TM proteins. The cleavage site between SU and TM requires the minimal sequence [KR]-X-[KR]-R. About 2 of the 9 disulfide bonds of gp41 are reduced by P4HB/PDI, following binding to CD4 receptor.

The protein localises to the virion membrane. It localises to the host cell membrane. The protein resides in the host endosome membrane. Oligomerizes in the host endoplasmic reticulum into predominantly trimers. In a second time, gp160 transits in the host Golgi, where glycosylation is completed. The precursor is then proteolytically cleaved in the trans-Golgi and thereby activated by cellular furin or furin-like proteases to produce gp120 and gp41. In terms of biological role, attaches the virus to the host lymphoid cell by binding to the primary receptor CD4. This interaction induces a structural rearrangement creating a high affinity binding site for a chemokine coreceptor like CXCR4 and/or CCR5. Acts as a ligand for CD209/DC-SIGN and CLEC4M/DC-SIGNR, which are respectively found on dendritic cells (DCs), and on endothelial cells of liver sinusoids and lymph node sinuses. These interactions allow capture of viral particles at mucosal surfaces by these cells and subsequent transmission to permissive cells. HIV subverts the migration properties of dendritic cells to gain access to CD4+ T-cells in lymph nodes. Virus transmission to permissive T-cells occurs either in trans (without DCs infection, through viral capture and transmission), or in cis (following DCs productive infection, through the usual CD4-gp120 interaction), thereby inducing a robust infection. In trans infection, bound virions remain infectious over days and it is proposed that they are not degraded, but protected in non-lysosomal acidic organelles within the DCs close to the cell membrane thus contributing to the viral infectious potential during DCs' migration from the periphery to the lymphoid tissues. On arrival at lymphoid tissues, intact virions recycle back to DCs' cell surface allowing virus transmission to CD4+ T-cells. Functionally, acts as a class I viral fusion protein. Under the current model, the protein has at least 3 conformational states: pre-fusion native state, pre-hairpin intermediate state, and post-fusion hairpin state. During fusion of viral and target intracellular membranes, the coiled coil regions (heptad repeats) assume a trimer-of-hairpins structure, positioning the fusion peptide in close proximity to the C-terminal region of the ectodomain. The formation of this structure appears to drive apposition and subsequent fusion of viral and target cell membranes. Complete fusion occurs in host cell endosomes and is dynamin-dependent, however some lipid transfer might occur at the plasma membrane. The virus undergoes clathrin-dependent internalization long before endosomal fusion, thus minimizing the surface exposure of conserved viral epitopes during fusion and reducing the efficacy of inhibitors targeting these epitopes. Membranes fusion leads to delivery of the nucleocapsid into the cytoplasm. This chain is Envelope glycoprotein gp160, found in Human immunodeficiency virus type 1 group M subtype J (isolate SE9173) (HIV-1).